Consider the following 99-residue polypeptide: Protein IDA-LIKE 3 (99 aa).

The signal sequence occupies residues 1 to 32; sequence MSSRSHRSRKYQLTRTIPILVLLLVLLSCCNG. The span at 36 to 45 shows a compositional bias: polar residues; sequence TNVFNTSSPP. Disordered stretches follow at residues 36 to 58 and 73 to 99; these read TNVF…HDHV and SLPR…STKT. Residues 46–58 show a composition bias toward basic and acidic residues; it reads KQKDVVSPPHDHV.

As to expression, expressed in flowers and seedlings. Detected at the base of pedicel, in the floral abscission zone and in vascular tissues.

Its subcellular location is the secreted. The protein localises to the extracellular space. May be involved in floral abscission. The polypeptide is Protein IDA-LIKE 3 (IDL3) (Arabidopsis thaliana (Mouse-ear cress)).